The chain runs to 497 residues: IWS1-like protein (497 aa).

Positions 1–191 (MSDHEGASPA…SDRRGGRNFE (191 aa)) are disordered. 2 stretches are compositionally biased toward low complexity: residues 7 to 23 (ASPA…PVSP) and 47 to 57 (PLAPRSPASPR). Basic and acidic residues-rich tracts occupy residues 123 to 134 (EGDKQQKRKDLF), 144 to 160 (DRPK…VKGD), and 181 to 191 (PSDRRGGRNFE). The 81-residue stretch at 281-361 (SALSEWLAPL…GEWARPIYHL (81 aa)) folds into the TFIIS N-terminal domain. The interval 369-433 (SRQEREERDY…GDKGYINRAR (65 aa)) is disordered. 2 stretches are compositionally biased toward basic and acidic residues: residues 370–382 (RQER…SRMP) and 401–411 (APKRPRIRDAE).

Belongs to the IWS1 family.

The protein localises to the nucleus. This chain is IWS1-like protein, found in Caenorhabditis briggsae.